A 213-amino-acid polypeptide reads, in one-letter code: Nicotinate-nucleotide adenylyltransferase (213 aa).

The protein belongs to the NadD family.

The enzyme catalyses nicotinate beta-D-ribonucleotide + ATP + H(+) = deamido-NAD(+) + diphosphate. Its pathway is cofactor biosynthesis; NAD(+) biosynthesis; deamido-NAD(+) from nicotinate D-ribonucleotide: step 1/1. In terms of biological role, catalyzes the reversible adenylation of nicotinate mononucleotide (NaMN) to nicotinic acid adenine dinucleotide (NaAD). This is Nicotinate-nucleotide adenylyltransferase from Salmonella typhimurium (strain LT2 / SGSC1412 / ATCC 700720).